A 215-amino-acid chain; its full sequence is Pyridoxine/pyridoxamine 5'-phosphate oxidase (215 aa).

Residues 9–12 and Lys-69 each bind substrate; that span reads RRDY. FMN-binding positions include 64-69, 79-80, Lys-86, and Gln-108; these read RVLLLK and FS. Residues Tyr-126, Arg-130, and Ser-134 each contribute to the substrate site. Residues 143 to 144 and Trp-188 each bind FMN; that span reads QS. 194-196 contacts substrate; sequence RLH. Position 198 (Arg-198) interacts with FMN.

It belongs to the pyridoxamine 5'-phosphate oxidase family. Homodimer. FMN is required as a cofactor.

The catalysed reaction is pyridoxamine 5'-phosphate + O2 + H2O = pyridoxal 5'-phosphate + H2O2 + NH4(+). It carries out the reaction pyridoxine 5'-phosphate + O2 = pyridoxal 5'-phosphate + H2O2. It functions in the pathway cofactor metabolism; pyridoxal 5'-phosphate salvage; pyridoxal 5'-phosphate from pyridoxamine 5'-phosphate: step 1/1. It participates in cofactor metabolism; pyridoxal 5'-phosphate salvage; pyridoxal 5'-phosphate from pyridoxine 5'-phosphate: step 1/1. Catalyzes the oxidation of either pyridoxine 5'-phosphate (PNP) or pyridoxamine 5'-phosphate (PMP) into pyridoxal 5'-phosphate (PLP). The polypeptide is Pyridoxine/pyridoxamine 5'-phosphate oxidase (Ectopseudomonas mendocina (strain ymp) (Pseudomonas mendocina)).